The sequence spans 139 residues: ATP synthase epsilon chain (139 aa).

It belongs to the ATPase epsilon chain family. In terms of assembly, F-type ATPases have 2 components, CF(1) - the catalytic core - and CF(0) - the membrane proton channel. CF(1) has five subunits: alpha(3), beta(3), gamma(1), delta(1), epsilon(1). CF(0) has three main subunits: a, b and c.

Its subcellular location is the cell membrane. Produces ATP from ADP in the presence of a proton gradient across the membrane. The sequence is that of ATP synthase epsilon chain from Pediococcus pentosaceus (strain ATCC 25745 / CCUG 21536 / LMG 10740 / 183-1w).